Reading from the N-terminus, the 260-residue chain is Scytalidopepsin B (260 aa).

The first 20 residues, 1 to 20 (MKFTTAAVLSALVSAEIAFA), serve as a signal peptide directing secretion. Positions 21–54 (APGGNGFARRQARRQARAAGLKASPFRQVNAKEA) are excised as a propeptide. Residues Cys101 and Cys181 are joined by a disulfide bond. Glu190 (proton acceptor) is an active-site residue. 2 cysteine pairs are disulfide-bonded: Cys195–Cys219 and Cys248–Cys257.

The protein belongs to the peptidase G1 family. Monomer.

The enzyme catalyses Hydrolysis of proteins with broad specificity, cleaving 24-Phe-|-Phe-25, but not 15-Leu-|-Tyr-16 and 25-Phe-|-Tyr-26 in the B chain of insulin.. The chain is Scytalidopepsin B from Scytalidium lignicola (Hyphomycete).